A 327-amino-acid chain; its full sequence is Gibberellin 2-beta-dioxygenase 3 (327 aa).

The Fe2OG dioxygenase domain maps to 173 to 278 (GSDQVFRVNH…RVSFIYFGGP (106 aa)). Position 183 (Y183) interacts with 2-oxoglutarate. Positions 202, 204, and 259 each coordinate Fe cation. Residues R269 and S271 each contribute to the 2-oxoglutarate site.

The protein belongs to the iron/ascorbate-dependent oxidoreductase family. GA2OX subfamily. The cofactor is L-ascorbate. Fe(2+) is required as a cofactor. As to expression, expressed in roots, shoot apex, leaf blades, leaf sheaths, stems and flowers.

It catalyses the reaction gibberellin A1 + 2-oxoglutarate + O2 = gibberellin A8 + succinate + CO2. In terms of biological role, catalyzes the 2-beta-hydroxylation of several biologically active gibberellins, leading to the homeostatic regulation of their endogenous level. Catabolism of gibberellins (GAs) plays a central role in plant development. In vitro, converts GA1, GA20, and GA29 to the corresponding 2-beta-hydroxylated products GA8, GA29-catabolite, respectively. The protein is Gibberellin 2-beta-dioxygenase 3 of Oryza sativa subsp. japonica (Rice).